Here is a 155-residue protein sequence, read N- to C-terminus: MLHRNPDEFLKSIPKDKRIMCLDMGEKQIGIAFSDKTQLIATAHSIYHRKNMSKDLGYLHRIFKENESGSMVIGLPLKMDEQETKWCKTIIQFANKIIKKYKVNIYLQDESFSTSIATHTLKITGISITKSKKIDDKISACIILQRTLDKINTIK.

The protein belongs to the YqgF nuclease family.

The protein localises to the cytoplasm. Functionally, could be a nuclease involved in processing of the 5'-end of pre-16S rRNA. The chain is Putative pre-16S rRNA nuclease from Wolbachia pipientis wMel.